Consider the following 264-residue polypeptide: tRNA pseudouridine synthase A (264 aa).

Catalysis depends on aspartate 51, which acts as the Nucleophile. Residue tyrosine 109 participates in substrate binding.

Belongs to the tRNA pseudouridine synthase TruA family. As to quaternary structure, homodimer.

The enzyme catalyses uridine(38/39/40) in tRNA = pseudouridine(38/39/40) in tRNA. In terms of biological role, formation of pseudouridine at positions 38, 39 and 40 in the anticodon stem and loop of transfer RNAs. This Vibrio parahaemolyticus serotype O3:K6 (strain RIMD 2210633) protein is tRNA pseudouridine synthase A.